We begin with the raw amino-acid sequence, 831 residues long: uncharacterized protein (831 aa).

H787 functions as the Tele-phosphohistidine intermediate in the catalytic mechanism.

It belongs to the PEP-utilizing enzyme family.

This is an uncharacterized protein from Bacillus subtilis (strain 168).